Consider the following 596-residue polypeptide: PDZ and LIM domain protein 5 (596 aa).

Ser-2 is subject to N-acetylserine. Ser-2 carries the post-translational modification Phosphoserine. The region spanning 2–85 is the PDZ domain; sequence SNYSVSLVGP…SLNMTLQRAS (84 aa). An N6-acetyllysine; alternate modification is found at Lys-89. An N6-succinyllysine; alternate modification is found at Lys-89. Lys-89 is covalently cross-linked (Glycyl lysine isopeptide (Lys-Gly) (interchain with G-Cter in SUMO2); alternate). Ser-111, Ser-134, and Ser-137 each carry phosphoserine. Disordered regions lie at residues 121 to 165, 196 to 240, and 255 to 340; these read NNMA…SPSP, AGKT…GPPR, and THSD…RPGV. Residues 134–143 show a composition bias toward polar residues; sequence SVSSPKVTSI. Residues 144-165 are compositionally biased toward low complexity; that stretch reads PSPSSAFTPAHATTSSHASPSP. Polar residues-rich tracts occupy residues 205-219 and 226-237; these read RQPTVTSVCSETSQE and RGSQGDSKQQNG. Phosphoserine occurs at positions 228 and 260. Basic and acidic residues-rich tracts occupy residues 258–273 and 293–304; these read DASKKRLIEDTEDWRP and EHLKESEADNTK. The segment covering 305 to 335 has biased composition (polar residues); it reads KANNSQEPSPQLASSVASTRSMPESLDSPTS. A phosphoserine mark is found at Ser-309, Ser-313, and Ser-322. Lys-350 is modified (N6-acetyllysine). A disordered region spans residues 354–381; the sequence is STGVIKSPSWQRPNQGVPSTGRISNSAT. Phosphoserine is present on residues Ser-360 and Ser-362. The span at 361-381 shows a compositional bias: polar residues; sequence PSWQRPNQGVPSTGRISNSAT. 3 consecutive LIM zinc-binding domains span residues 418–477, 477–536, and 536–596; these read PMCA…FFAP, PECG…LFGT, and TICH…SVNF.

Interacts with various PKC isoforms through the LIM domains. Interacts with actin and alpha-actinin through the PDZ domain. Interacts (via LIM domains) with SIPA1L1/SPAR; this interaction may occur preferentially with isoform 1. In terms of tissue distribution, heart and skeletal muscle specific. Expression is commonly increased in the brain of patients with bipolar disorder, schizophrenia, and major depression.

It is found in the postsynaptic density. Its subcellular location is the presynapse. The protein resides in the postsynapse. The protein localises to the cytoplasm. It localises to the cytosol. In terms of biological role, may play an important role in the heart development by scaffolding PKC to the Z-disk region. May play a role in the regulation of cardiomyocyte expansion. Isoforms lacking the LIM domains may negatively modulate the scaffolding activity of isoform 1. Overexpression promotes the development of heart hypertrophy. Contributes to the regulation of dendritic spine morphogenesis in neurons. May be required to restrain postsynaptic growth of excitatory synapses. Isoform 1, but not isoform 2, expression favors spine thinning and elongation. The chain is PDZ and LIM domain protein 5 from Homo sapiens (Human).